The chain runs to 352 residues: Transcription factor MYB86 (352 aa).

HTH myb-type domains are found at residues 9–61 (KQKL…INYL) and 62–116 (RPDL…KKKL). 2 consecutive DNA-binding regions (H-T-H motif) follow at residues 37-61 (WSSV…INYL) and 89-112 (WSQI…NSCL).

In terms of tissue distribution, expressed in stems, flowers and seeds. Weakly expressed in leaves and roots.

The protein resides in the nucleus. Functionally, probable transcription factor. The chain is Transcription factor MYB86 (MYB86) from Arabidopsis thaliana (Mouse-ear cress).